The chain runs to 297 residues: Probable lipid kinase YegS-like (297 aa).

Residues 2–131 (STFPASLLIL…IDIARVNDKT (130 aa)) enclose the DAGKc domain. ATP-binding positions include Thr-40, 66 to 72 (GDGTINE), and Thr-93. Positions 213, 216, and 218 each coordinate Mg(2+). Catalysis depends on Glu-269, which acts as the Proton acceptor.

The protein belongs to the diacylglycerol/lipid kinase family. YegS lipid kinase subfamily. Mg(2+) serves as cofactor. The cofactor is Ca(2+).

It is found in the cytoplasm. Probably phosphorylates lipids; the in vivo substrate is unknown. The polypeptide is Probable lipid kinase YegS-like (Klebsiella pneumoniae (strain 342)).